A 568-amino-acid chain; its full sequence is MPASISRSTYASMFGPTTGDRLRLGDTELVIEVERDLTTYGEEVKFGGGKVIRDGMGQSQRTRAEGAMDTVITNALIVDWTGIYKADVGLRDGRIAKIGKAGNPDTQPGVDIVIGPGTEIIAGEGRILTAGGMDAHIHFICPQQIEDSLHSGITTMLGGGTGPAHGTLATTCTPGPWHIGRMLQAADAFPINLAFAGKGNASLPAGLEEQVRAGASCLKLHEDWGTTPAAIDCCLSVADRMDVQVMIHTDTLNESGFVENTLAAIGGRTIHAFHTEGAGGGHAPDIIKVVGAANVIPSSTNPTMPYTANTVEEHLDMLMVCHHLDRSIPEDVAFAESRIRKETIAAEDILHDMGAFSVISSDSQAMGRVGEVITRTWQTAHKMKVQRGRLAEETGANDNQRVRRYIAKYTINPAIAHGLSRHIGSVEEGKRADLVLWQPAFFGAKPDLVLLGGMIVCAQMGDPNGSIPAQPYYSRPMFGAFGGALHASAVTFVSQAAEEDGVGERLRLQKGTLAVQGTRDIGKADMKLNAHRPSIEVNPETYEVRADGELLTCQPLAELPLAQRYFLY.

The Urease domain maps to 131–568 (GGMDAHIHFI…LPLAQRYFLY (438 aa)). Ni(2+) is bound by residues His-136, His-138, and Lys-219. Lys-219 carries the N6-carboxylysine modification. His-221 contributes to the substrate binding site. Residues His-248 and His-274 each contribute to the Ni(2+) site. His-322 (proton donor) is an active-site residue. Ni(2+) is bound at residue Asp-362.

Belongs to the metallo-dependent hydrolases superfamily. Urease alpha subunit family. In terms of assembly, heterotrimer of UreA (gamma), UreB (beta) and UreC (alpha) subunits. Three heterotrimers associate to form the active enzyme. Ni cation is required as a cofactor. Post-translationally, carboxylation allows a single lysine to coordinate two nickel ions.

The protein resides in the cytoplasm. It carries out the reaction urea + 2 H2O + H(+) = hydrogencarbonate + 2 NH4(+). The protein operates within nitrogen metabolism; urea degradation; CO(2) and NH(3) from urea (urease route): step 1/1. The protein is Urease subunit alpha of Cereibacter sphaeroides (strain ATCC 17023 / DSM 158 / JCM 6121 / CCUG 31486 / LMG 2827 / NBRC 12203 / NCIMB 8253 / ATH 2.4.1.) (Rhodobacter sphaeroides).